We begin with the raw amino-acid sequence, 604 residues long: Ectonucleoside triphosphate diphosphohydrolase 7 (604 aa).

Topologically, residues 1 to 28 are cytoplasmic; the sequence is MARISFSYLCPASWYFTVPTVSPFLRQR. Residues 29-49 traverse the membrane as a helical segment; sequence VAFLGLFFISCLLLLMLIIDF. Residues 50 to 546 are Vesicular-facing; that stretch reads RHWSASLPRD…QAHGSWFRLS (497 aa). The active-site Proton acceptor is the Glu217. Residue Asn330 is glycosylated (N-linked (GlcNAc...) asparagine). Cysteines 448 and 477 form a disulfide. Residues 547 to 567 traverse the membrane as a helical segment; the sequence is FVYNHYLFFACILVVLLAIVL. The Cytoplasmic segment spans residues 568–604; sequence YLLRLRRIHHRQTRASAPLDLLWLEEVVPMMGVQVGP.

The protein belongs to the GDA1/CD39 NTPase family. It depends on Ca(2+) as a cofactor. Requires Mg(2+) as cofactor.

The protein localises to the cytoplasmic vesicle membrane. It carries out the reaction a ribonucleoside 5'-triphosphate + H2O = a ribonucleoside 5'-diphosphate + phosphate + H(+). It catalyses the reaction UTP + H2O = UDP + phosphate + H(+). The catalysed reaction is GTP + H2O = GDP + phosphate + H(+). The enzyme catalyses CTP + H2O = CDP + phosphate + H(+). Functionally, catalyzes the hydrolysis of nucleoside triphosphates and diphosphates in a calcium- or magnesium-dependent manner. Preferentially hydrolyzes nucleoside 5'-triphosphates, with substrate preference for UTP &gt; GTP &gt; CTP. Hydrolyzes ATP and nucleoside diphosphates only to a minor extent. The sequence is that of Ectonucleoside triphosphate diphosphohydrolase 7 (ENTPD7) from Pongo abelii (Sumatran orangutan).